The sequence spans 226 residues: ATP-dependent dethiobiotin synthetase BioD (226 aa).

14 to 19 (GIGKTF) provides a ligand contact to ATP. Thr-18 contacts Mg(2+). Lys-39 is an active-site residue. Ser-43 lines the substrate pocket. ATP contacts are provided by residues Asp-56, 117-120 (EGVG), 177-178 (NT), 206-208 (PHI), and Asn-213. Residues Asp-56 and Glu-117 each contribute to the Mg(2+) site.

This sequence belongs to the dethiobiotin synthetase family. As to quaternary structure, homodimer. It depends on Mg(2+) as a cofactor.

It is found in the cytoplasm. It carries out the reaction (7R,8S)-7,8-diammoniononanoate + CO2 + ATP = (4R,5S)-dethiobiotin + ADP + phosphate + 3 H(+). It functions in the pathway cofactor biosynthesis; biotin biosynthesis; biotin from 7,8-diaminononanoate: step 1/2. In terms of biological role, catalyzes a mechanistically unusual reaction, the ATP-dependent insertion of CO2 between the N7 and N8 nitrogen atoms of 7,8-diaminopelargonic acid (DAPA, also called 7,8-diammoniononanoate) to form a ureido ring. The protein is ATP-dependent dethiobiotin synthetase BioD of Xylella fastidiosa (strain M12).